The following is a 269-amino-acid chain: Probable cytochrome c oxidase subunit 2 (269 aa).

3 helical membrane-spanning segments follow: residues 8–28 (ITLI…PLPW), 50–70 (LLYI…FVCI), and 87–107 (ILIE…IAVP). Cu cation is bound by residues H189, C224, C228, and H232.

It belongs to the cytochrome c oxidase subunit 2 family. Cu cation is required as a cofactor. Requires heme as cofactor.

It localises to the cell membrane. It carries out the reaction 4 Fe(II)-[cytochrome c] + O2 + 8 H(+)(in) = 4 Fe(III)-[cytochrome c] + 2 H2O + 4 H(+)(out). In terms of biological role, subunits I and II form the functional core of the enzyme complex. Electrons originating in cytochrome c are transferred via heme a and Cu(A) to the binuclear center formed by heme a3 and Cu(B). The polypeptide is Probable cytochrome c oxidase subunit 2 (ctaC) (Rickettsia bellii (strain RML369-C)).